Here is a 461-residue protein sequence, read N- to C-terminus: Photosystem II CP43 reaction center protein (461 aa).

5 helical membrane passes run 57–81, 122–143, 166–188, 243–263, and 279–300; these read LFEV…SHLA, LRGP…KDKN, KAMF…RIIS, KPFG…LSYS, and WYNN…ASQS. [CaMn4O5] cluster is bound at residue Glu-355. The chain crosses the membrane as a helical span at residues 435 to 459; the sequence is RARAAAAGFEKGIDRATEPVLAMRD.

This sequence belongs to the PsbB/PsbC family. PsbC subfamily. PSII is composed of 1 copy each of membrane proteins PsbA, PsbB, PsbC, PsbD, PsbE, PsbF, PsbH, PsbI, PsbJ, PsbK, PsbL, PsbM, PsbT, PsbX, PsbY, PsbZ, Psb30/Ycf12, peripheral proteins PsbO, CyanoQ (PsbQ), PsbU, PsbV and a large number of cofactors. It forms dimeric complexes. Requires Binds multiple chlorophylls and provides some of the ligands for the Ca-4Mn-5O cluster of the oxygen-evolving complex. It may also provide a ligand for a Cl- that is required for oxygen evolution. PSII binds additional chlorophylls, carotenoids and specific lipids. as cofactor.

It is found in the cellular thylakoid membrane. In terms of biological role, one of the components of the core complex of photosystem II (PSII). It binds chlorophyll and helps catalyze the primary light-induced photochemical processes of PSII. PSII is a light-driven water:plastoquinone oxidoreductase, using light energy to abstract electrons from H(2)O, generating O(2) and a proton gradient subsequently used for ATP formation. This Synechococcus elongatus (strain ATCC 33912 / PCC 7942 / FACHB-805) (Anacystis nidulans R2) protein is Photosystem II CP43 reaction center protein.